Reading from the N-terminus, the 890-residue chain is Alanine--tRNA ligase (890 aa).

Positions 569, 573, 671, and 675 each coordinate Zn(2+).

Belongs to the class-II aminoacyl-tRNA synthetase family. It depends on Zn(2+) as a cofactor.

It localises to the cytoplasm. The catalysed reaction is tRNA(Ala) + L-alanine + ATP = L-alanyl-tRNA(Ala) + AMP + diphosphate. Its function is as follows. Catalyzes the attachment of alanine to tRNA(Ala) in a two-step reaction: alanine is first activated by ATP to form Ala-AMP and then transferred to the acceptor end of tRNA(Ala). Also edits incorrectly charged Ser-tRNA(Ala) and Gly-tRNA(Ala) via its editing domain. In Synechococcus sp. (strain CC9902), this protein is Alanine--tRNA ligase.